The sequence spans 343 residues: UPF0283 membrane protein blr7254 (343 aa).

A run of 3 helical transmembrane segments spans residues 64–84, 97–117, and 214–234; these read GALF…LGVV, LGFV…VVIG, and IVTA…VAAL.

This sequence belongs to the UPF0283 family.

Its subcellular location is the cell inner membrane. The polypeptide is UPF0283 membrane protein blr7254 (Bradyrhizobium diazoefficiens (strain JCM 10833 / BCRC 13528 / IAM 13628 / NBRC 14792 / USDA 110)).